The chain runs to 160 residues: Phosphopantetheine adenylyltransferase (160 aa).

Ser9 provides a ligand contact to substrate. ATP-binding positions include 9 to 10 (SF) and His17. The substrate site is built by Lys41, Thr73, and Arg87. Residues 88-90 (GMR), Glu98, and 123-129 (YTFFSSS) contribute to the ATP site.

The protein belongs to the bacterial CoaD family. As to quaternary structure, homohexamer. It depends on Mg(2+) as a cofactor.

The protein resides in the cytoplasm. The catalysed reaction is (R)-4'-phosphopantetheine + ATP + H(+) = 3'-dephospho-CoA + diphosphate. The protein operates within cofactor biosynthesis; coenzyme A biosynthesis; CoA from (R)-pantothenate: step 4/5. In terms of biological role, reversibly transfers an adenylyl group from ATP to 4'-phosphopantetheine, yielding dephospho-CoA (dPCoA) and pyrophosphate. This Roseiflexus castenholzii (strain DSM 13941 / HLO8) protein is Phosphopantetheine adenylyltransferase.